A 469-amino-acid chain; its full sequence is Neuraminidase (469 aa).

The Intravirion segment spans residues 1 to 6; that stretch reads MNPNQK. The chain crosses the membrane as a helical span at residues 7 to 29; sequence IITIGSVSLTIATVCFLMQIAIL. Positions 11-33 are involved in apical transport and lipid raft association; sequence GSVSLTIATVCFLMQIAILATTV. At 30–469 the chain is on the virion surface side; sequence ATTVTLHFKQ…DGANINFMPI (440 aa). Residues 36–88 are hypervariable stalk region; it reads HFKQNECNPPANNQVVPCEPIIIERNITEIVYLNNITIEKEVCPEVAEYRNWS. Residues N61, N70, and N86 are each glycosylated (N-linked (GlcNAc...) asparagine; by host). The interval 91–469 is head of neuraminidase; that stretch reads QCQITGFAPF…DGANINFMPI (379 aa). Disulfide bonds link C92-C417, C124-C129, C183-C230, C232-C237, C278-C291, C280-C289, C318-C337, and C421-C447. R118 provides a ligand contact to substrate. An N-linked (GlcNAc...) asparagine; by host glycan is attached at N146. Catalysis depends on D151, which acts as the Proton donor/acceptor. R152 serves as a coordination point for substrate. Residues N200 and N234 are each glycosylated (N-linked (GlcNAc...) asparagine; by host). Residue 276-277 coordinates substrate; that stretch reads EE. Substrate is bound at residue R292. Ca(2+)-binding residues include D293, G297, and D324. A disordered region spans residues 324 to 349; that stretch reads DTPRSDDSSSNSNCRDPNNERGNPGV. R371 provides a ligand contact to substrate. Residue N402 is glycosylated (N-linked (GlcNAc...) asparagine; by host). Y406 (nucleophile) is an active-site residue.

This sequence belongs to the glycosyl hydrolase 34 family. In terms of assembly, homotetramer. Ca(2+) is required as a cofactor. N-glycosylated.

The protein resides in the virion membrane. It is found in the host apical cell membrane. It catalyses the reaction Hydrolysis of alpha-(2-&gt;3)-, alpha-(2-&gt;6)-, alpha-(2-&gt;8)- glycosidic linkages of terminal sialic acid residues in oligosaccharides, glycoproteins, glycolipids, colominic acid and synthetic substrates.. Its activity is regulated as follows. Inhibited by the neuraminidase inhibitors zanamivir (Relenza) and oseltamivir (Tamiflu). These drugs interfere with the release of progeny virus from infected cells and are effective against all influenza strains. Resistance to neuraminidase inhibitors is quite rare. Its function is as follows. Catalyzes the removal of terminal sialic acid residues from viral and cellular glycoconjugates. Cleaves off the terminal sialic acids on the glycosylated HA during virus budding to facilitate virus release. Additionally helps virus spread through the circulation by further removing sialic acids from the cell surface. These cleavages prevent self-aggregation and ensure the efficient spread of the progeny virus from cell to cell. Otherwise, infection would be limited to one round of replication. Described as a receptor-destroying enzyme because it cleaves a terminal sialic acid from the cellular receptors. May facilitate viral invasion of the upper airways by cleaving the sialic acid moieties on the mucin of the airway epithelial cells. Likely to plays a role in the budding process through its association with lipid rafts during intracellular transport. May additionally display a raft-association independent effect on budding. Plays a role in the determination of host range restriction on replication and virulence. Sialidase activity in late endosome/lysosome traffic seems to enhance virus replication. In Influenza A virus (strain A/Turkey/Wisconsin/1/1966 H9N2), this protein is Neuraminidase.